We begin with the raw amino-acid sequence, 518 residues long: Ankyrin repeat and SOCS box protein 3 (518 aa).

11 ANK repeats span residues 9–38, 42–71, 78–107, 111–140, 145–174, 178–207, 211–240, 246–275, 279–308, 315–346, and 348–373; these read DTCS…SVDV, RGWM…SENY, EGFC…DPNA, EETT…NVNG, CGWN…NKEC, FGIT…NVNC, DKAT…DPDL, SWQL…RACD, NKVS…SPDA, GFSS…QINE, and HLAY…SLGP. The SOCS box domain maps to 441–504; sequence MLSARASNAW…HNYLLYEDVL (64 aa).

The protein belongs to the ankyrin SOCS box (ASB) family. Interacts with ELOB and TNFRSF1B.

It is found in the cytoplasm. The protein operates within protein modification; protein ubiquitination. Its function is as follows. Probable substrate-recognition component of a SCF-like ECS (Elongin-Cullin-SOCS-box protein) E3 ubiquitin-protein ligase complex which mediates the ubiquitination and subsequent proteasomal degradation of target proteins. Recognizes TNFRSF1B. Plays a role in the down-regulation of antiviral innate immunity by targeting MAVS for ubiquitin-proteasomal degradation. Also destabilizes TRAF6 by enhancing its 'Lys-48'-linked polyubiquitination. This Homo sapiens (Human) protein is Ankyrin repeat and SOCS box protein 3 (ASB3).